Consider the following 730-residue polypeptide: MSDRFELYLTCPKGLEGLLAEEANQLGLTEVREHTSAIRGSADMETAYRLCLWSRLANRVLLVLKRFSMKNADDLYDGVHAVDWAEHLEADGTLAVEFSGHGSGIDNTHFGALKVKDAIVDKLRSREGLRPSVDKLDPDLRVHLRLDRGEAILSLDLSGHSLHQRGYRLQQGAAPLKENLAAAVLIRAGWPRIAAEGGALADPMCGVGTFLVEAAMIAADIAPNLKRERWGFSAWLGHVPALWRKLHDEAQARAQAGLAKPPLWIRGYEADPRLIQPGRNNVERAGLGDWVKIYQGEVASFEPRPDQNQKGLVISNPPYGERLGDEASLLYLYQNLGERLRQACMGWEAAVFTGAPELGKRMGIRSHKQYAFWNGALPCKLLLFKVQPDQFVTGERRQAAVEEGEPRRQAPVASEPARLSEGAQMFANRLQKNFKQLGKWARREQVDCYRVYDADMPEYALAVDLYQDWVHVQEYAAPRSVDPDKAQVRLLDALAAIPQALGIDPQRVVLKRRERQSGTRQYERQATEGRFQEVTEGGVKLLVNLTDYLDTGLFLDHRPMRMRIQREAVGKRFLNLFCYTATATVHAAKGGARSTTSVDLSKTYLDWARRNLSLNGFSERNRLEQSDVMAWLQNNQESFDLIFIDPPTFSNSKRMEGVFDVQRDHVELLDLAMARLAPGGVLYFSNNFRKFQLDEHLSTRYAVEEISAQTLDPDFARNNRIHRAWQLRLR.

In terms of domain architecture, THUMP spans 46–157 (TAYRLCLWSR…RGEAILSLDL (112 aa)). A compositionally biased stretch (basic and acidic residues) spans 399–408 (AAVEEGEPRR). Residues 399-418 (AAVEEGEPRRQAPVASEPAR) form a disordered region.

The protein belongs to the methyltransferase superfamily. RlmKL family.

The protein resides in the cytoplasm. The catalysed reaction is guanosine(2445) in 23S rRNA + S-adenosyl-L-methionine = N(2)-methylguanosine(2445) in 23S rRNA + S-adenosyl-L-homocysteine + H(+). The enzyme catalyses guanosine(2069) in 23S rRNA + S-adenosyl-L-methionine = N(2)-methylguanosine(2069) in 23S rRNA + S-adenosyl-L-homocysteine + H(+). Specifically methylates the guanine in position 2445 (m2G2445) and the guanine in position 2069 (m7G2069) of 23S rRNA. In Pseudomonas entomophila (strain L48), this protein is Ribosomal RNA large subunit methyltransferase K/L.